A 102-amino-acid polypeptide reads, in one-letter code: Large ribosomal subunit protein uL24 (102 aa).

Belongs to the universal ribosomal protein uL24 family. As to quaternary structure, part of the 50S ribosomal subunit.

One of two assembly initiator proteins, it binds directly to the 5'-end of the 23S rRNA, where it nucleates assembly of the 50S subunit. Its function is as follows. One of the proteins that surrounds the polypeptide exit tunnel on the outside of the subunit. In Paraburkholderia xenovorans (strain LB400), this protein is Large ribosomal subunit protein uL24.